The following is a 392-amino-acid chain: N-acetylneuraminate epimerase (392 aa).

A signal peptide spans 1–35; the sequence is MTQIYHQYKKKLSTKVILLSALTLCITFSLPYANA. Kelch repeat units follow at residues 56–100, 102–155, 157–192, 193–238, 241–290, 312–361, and 363–392; these read HLYV…VALS, KLYV…TTLN, TQAL…AVVN, AYFD…TAKK, LILI…LAGA, QQFN…QDKD, and VILL…LHLE. Glu-247 serves as the catalytic Proton acceptor.

The protein belongs to the NanM family. In terms of assembly, homodimer.

The protein resides in the periplasm. It catalyses the reaction N-acetyl-alpha-neuraminate = N-acetyl-beta-neuraminate. Its function is as follows. Converts alpha-N-acetylneuranimic acid (Neu5Ac) to the beta-anomer, accelerating the equilibrium between the alpha- and beta-anomers. Probably facilitates sialidase-negative bacteria to compete successfully for limited amounts of extracellular Neu5Ac, which is likely taken up in the beta-anomer. In addition, the rapid removal of sialic acid from solution might be advantageous to the bacterium to damp down host responses. In Yersinia enterocolitica serotype O:8 / biotype 1B (strain NCTC 13174 / 8081), this protein is N-acetylneuraminate epimerase.